We begin with the raw amino-acid sequence, 473 residues long: MTTTPAPERAETEAMIAEVLSQYPKKAAKFRAKHLKANDPEGSKECEVKSNIKSRPGVMTIRGCAYAGSKGVVWGPVKDMVTISHGPVGCGQYSWATRRNYAHGHLGVDNFTAMQITTDFQEKDIVFGGDPKLEQGLDEIVELFPLAKGISVQSECPIGLIGDDIEAVARVSSRLDIPVMRVRCEGFRGVSQSLGHHIANDAVRDHVLGTGGDSFEQTDYDVALIGDYNIGGDAWASRRILEEMGLRVIAQWSGDGTINEMASTHLSKLNLIHCYRSMNYICTTMEERFGTPWTEFNFFGPTKIISSMRKIAEFFDDEIKAKNRAAIAGYQRCVDEITKAFRPRLEGKRVMLAVGPAPRHTIGSYEDLGMEVVGTAAEFAHRDDYTGPTACSKEGTGLYDDPSRVFELEEVAKRPDLIGSGPKEKYIFQKMGTPIEPYHGVDGFAIFARDMARHQQPGLDLLEAPWSKAGEVA.

[8Fe-7S] cluster is bound by residues Cys-64, Cys-90, and Cys-156. A [7Fe-Mo-9S-C-homocitryl] cluster-binding site is contributed by Cys-274.

The protein belongs to the NifD/NifK/NifE/NifN family. Tetramer of two alpha and two beta chains. Forms complex with the iron protein (nitrogenase component 2). [8Fe-7S] cluster is required as a cofactor. The cofactor is [7Fe-Mo-9S-C-homocitryl] cluster.

It catalyses the reaction N2 + 8 reduced [2Fe-2S]-[ferredoxin] + 16 ATP + 16 H2O = H2 + 8 oxidized [2Fe-2S]-[ferredoxin] + 2 NH4(+) + 16 ADP + 16 phosphate + 6 H(+). Functionally, this molybdenum-iron protein is part of the nitrogenase complex that catalyzes the key enzymatic reactions in nitrogen fixation. The chain is Nitrogenase molybdenum-iron protein alpha chain (nifD) from Frankia alni.